A 329-amino-acid polypeptide reads, in one-letter code: GTPase Obg (329 aa).

Residues 2–160 (YNFKDSVSIT…LNVRLELFLV (159 aa)) form the Obg domain. One can recognise an OBG-type G domain in the interval 161 to 327 (ADIGLVGPPN…LIKEFFILAK (167 aa)). Residues 167–174 (GPPNAGKS), 192–196 (FTTKI), 213–216 (DIPG), 280–283 (NKLD), and 308–310 (SIY) each bind GTP. Residues serine 174 and threonine 194 each contribute to the Mg(2+) site.

This sequence belongs to the TRAFAC class OBG-HflX-like GTPase superfamily. OBG GTPase family. As to quaternary structure, monomer. Mg(2+) serves as cofactor.

It is found in the cytoplasm. Its function is as follows. An essential GTPase which binds GTP, GDP and possibly (p)ppGpp with moderate affinity, with high nucleotide exchange rates and a fairly low GTP hydrolysis rate. Plays a role in control of the cell cycle, stress response, ribosome biogenesis and in those bacteria that undergo differentiation, in morphogenesis control. The chain is GTPase Obg from Borrelia garinii subsp. bavariensis (strain ATCC BAA-2496 / DSM 23469 / PBi) (Borreliella bavariensis).